The primary structure comprises 196 residues: FMN-dependent NADH:quinone oxidoreductase (196 aa).

Residues Ser10, 16–18 (SQS), 93–96 (MYNF), and 137–140 (TRGG) each bind FMN.

The protein belongs to the azoreductase type 1 family. In terms of assembly, homodimer. Requires FMN as cofactor.

The catalysed reaction is 2 a quinone + NADH + H(+) = 2 a 1,4-benzosemiquinone + NAD(+). It carries out the reaction N,N-dimethyl-1,4-phenylenediamine + anthranilate + 2 NAD(+) = 2-(4-dimethylaminophenyl)diazenylbenzoate + 2 NADH + 2 H(+). Its function is as follows. Quinone reductase that provides resistance to thiol-specific stress caused by electrophilic quinones. Functionally, also exhibits azoreductase activity. Catalyzes the reductive cleavage of the azo bond in aromatic azo compounds to the corresponding amines. The sequence is that of FMN-dependent NADH:quinone oxidoreductase from Shewanella amazonensis (strain ATCC BAA-1098 / SB2B).